The sequence spans 185 residues: Threonylcarbamoyl-AMP synthase (185 aa).

The YrdC-like domain occupies 4–185 (SFRVQQAARE…LATGEVVRPG (182 aa)).

It belongs to the SUA5 family. TsaC subfamily.

The protein resides in the cytoplasm. It carries out the reaction L-threonine + hydrogencarbonate + ATP = L-threonylcarbamoyladenylate + diphosphate + H2O. Its function is as follows. Required for the formation of a threonylcarbamoyl group on adenosine at position 37 (t(6)A37) in tRNAs that read codons beginning with adenine. Catalyzes the conversion of L-threonine, HCO(3)(-)/CO(2) and ATP to give threonylcarbamoyl-AMP (TC-AMP) as the acyladenylate intermediate, with the release of diphosphate. This chain is Threonylcarbamoyl-AMP synthase, found in Pseudomonas putida (strain ATCC 47054 / DSM 6125 / CFBP 8728 / NCIMB 11950 / KT2440).